Consider the following 246-residue polypeptide: NLP effector protein 2 (246 aa).

The signal sequence occupies residues Met-1 to Gly-19. The Conserved undecapeptide motif I signature appears at Ala-113–Asp-123. A Hepta-peptide GHRHDWE motif II motif is present at residues Gly-130–Glu-136.

It belongs to the Necrosis inducing protein (NPP1) family.

The protein resides in the secreted. Secreted effector that contributes strongly to virulence during infection by P.capsici. Causes large necrotic areas in both host C.annuum and non-host N.benthamiana. This Phytophthora capsici protein is NLP effector protein 2.